Reading from the N-terminus, the 563-residue chain is Tripeptidyl-peptidase 1 (563 aa).

Positions 1–19 are cleaved as a signal peptide; that stretch reads MRLRTCLLGLLALCVASKC. The propeptide at 20–195 is removed in mature form; sequence SYSPEPDQQR…PEPQVSGTVG (176 aa). Cys111 and Cys122 are disulfide-bonded. A Peptidase S53 domain is found at 199 to 563; the sequence is GVTPSVIRQR…PALLKALIKP (365 aa). Asn210 and Asn222 each carry an N-linked (GlcNAc...) asparagine glycan. Residues Glu272 and Asp276 each act as charge relay system in the active site. 3 N-linked (GlcNAc...) asparagine glycosylation sites follow: Asn286, Asn313, and Asn443. Intrachain disulfides connect Cys365–Cys526 and Cys522–Cys537. Ser475 serves as the catalytic Charge relay system. Ca(2+) is bound by residues Asp517 and Val518. Ca(2+)-binding residues include Gly539, Gly541, and Asp543.

Monomer. Interacts with CLN5. Interacts with CLN3. Ca(2+) serves as cofactor. Activated by autocatalytic proteolytical processing upon acidification. N-glycosylation is required for processing and activity.

The protein localises to the lysosome. Its subcellular location is the melanosome. The catalysed reaction is Release of an N-terminal tripeptide from a polypeptide, but also has endopeptidase activity.. Functionally, lysosomal serine protease with tripeptidyl-peptidase I activity. May act as a non-specific lysosomal peptidase which generates tripeptides from the breakdown products produced by lysosomal proteinases. Requires substrates with an unsubstituted N-terminus. The chain is Tripeptidyl-peptidase 1 (TPP1) from Canis lupus familiaris (Dog).